We begin with the raw amino-acid sequence, 168 residues long: Photosystem I assembly protein Ycf3 (168 aa).

3 TPR repeats span residues 35-68, 72-105, and 120-153; these read AFTY…EIDP, SYIL…NPFL, and GEQA…TPGN.

It belongs to the Ycf3 family.

It is found in the plastid. The protein resides in the chloroplast thylakoid membrane. Essential for the assembly of the photosystem I (PSI) complex. May act as a chaperone-like factor to guide the assembly of the PSI subunits. In Drimys granadensis, this protein is Photosystem I assembly protein Ycf3.